The primary structure comprises 156 residues: Arginine repressor (156 aa).

This sequence belongs to the ArgR family.

The protein resides in the cytoplasm. The protein operates within amino-acid biosynthesis; L-arginine biosynthesis [regulation]. Regulates arginine biosynthesis genes. The polypeptide is Arginine repressor (Aeromonas hydrophila subsp. hydrophila (strain ATCC 7966 / DSM 30187 / BCRC 13018 / CCUG 14551 / JCM 1027 / KCTC 2358 / NCIMB 9240 / NCTC 8049)).